A 270-amino-acid chain; its full sequence is Phosphatidylglycerol--prolipoprotein diacylglyceryl transferase (270 aa).

The next 7 helical transmembrane spans lie at 14-34 (VIFE…LLGF), 60-80 (LLFN…VLFY), 95-115 (VWEG…AMLI), 128-148 (ADFV…GNFI), 176-196 (SQLY…NWYI), 202-222 (IGAT…IVEF), and 238-258 (ISMG…IMLV). Arginine 143 provides a ligand contact to a 1,2-diacyl-sn-glycero-3-phospho-(1'-sn-glycerol).

Belongs to the Lgt family.

It localises to the cell inner membrane. It catalyses the reaction L-cysteinyl-[prolipoprotein] + a 1,2-diacyl-sn-glycero-3-phospho-(1'-sn-glycerol) = an S-1,2-diacyl-sn-glyceryl-L-cysteinyl-[prolipoprotein] + sn-glycerol 1-phosphate + H(+). It functions in the pathway protein modification; lipoprotein biosynthesis (diacylglyceryl transfer). Functionally, catalyzes the transfer of the diacylglyceryl group from phosphatidylglycerol to the sulfhydryl group of the N-terminal cysteine of a prolipoprotein, the first step in the formation of mature lipoproteins. This is Phosphatidylglycerol--prolipoprotein diacylglyceryl transferase from Pasteurella multocida (strain Pm70).